Here is a 34-residue protein sequence, read N- to C-terminus: Thermomycolin (34 aa).

S33 serves as the catalytic Charge relay system.

Belongs to the peptidase S8 family.

It is found in the secreted. It catalyses the reaction Rather non-specific hydrolysis of proteins. Preferential cleavage: -Ala-|-Xaa-, -Tyr-|-Xaa-, -Phe-|-Xaa- in small molecular substrates.. In terms of biological role, this is an extracellular proteinase with a general specificity for apolar residues. The sequence is that of Thermomycolin from Malbranchea cinnamomea (Thermophilic fungus).